The sequence spans 309 residues: DNA-directed RNA polymerase subunit alpha (309 aa).

Positions 1–227 (MTFQVECVES…ALFEPLKNVS (227 aa)) are alpha N-terminal domain (alpha-NTD). The tract at residues 237–309 (EPTPESQTPI…GIKLQESKVS (73 aa)) is alpha C-terminal domain (alpha-CTD).

The protein belongs to the RNA polymerase alpha chain family. In cyanobacteria the RNAP catalytic core is composed of 2 alpha, 1 beta, 1 beta', 1 gamma and 1 omega subunit. When a sigma factor is associated with the core the holoenzyme is formed, which can initiate transcription.

The enzyme catalyses RNA(n) + a ribonucleoside 5'-triphosphate = RNA(n+1) + diphosphate. Functionally, DNA-dependent RNA polymerase catalyzes the transcription of DNA into RNA using the four ribonucleoside triphosphates as substrates. The sequence is that of DNA-directed RNA polymerase subunit alpha from Synechococcus elongatus (strain ATCC 33912 / PCC 7942 / FACHB-805) (Anacystis nidulans R2).